A 599-amino-acid polypeptide reads, in one-letter code: Aspartate--tRNA ligase (599 aa).

Glu175 lines the L-aspartate pocket. The aspartate stretch occupies residues Gln199–Lys202. L-aspartate contacts are provided by Arg221 and His446. Arg221–Glu223 is a binding site for ATP. Glu480 provides a ligand contact to ATP. Residue Arg487 coordinates L-aspartate. Gly532–Arg535 contacts ATP.

It belongs to the class-II aminoacyl-tRNA synthetase family. Type 1 subfamily. In terms of assembly, homodimer.

Its subcellular location is the cytoplasm. It carries out the reaction tRNA(Asp) + L-aspartate + ATP = L-aspartyl-tRNA(Asp) + AMP + diphosphate. Its function is as follows. Catalyzes the attachment of L-aspartate to tRNA(Asp) in a two-step reaction: L-aspartate is first activated by ATP to form Asp-AMP and then transferred to the acceptor end of tRNA(Asp). This is Aspartate--tRNA ligase from Streptomyces griseus subsp. griseus (strain JCM 4626 / CBS 651.72 / NBRC 13350 / KCC S-0626 / ISP 5235).